Reading from the N-terminus, the 185-residue chain is Transcription termination/antitermination protein NusG (185 aa).

Positions 133–161 constitute a KOW domain; that stretch reads PGEEVRVTEGPFADFNGTVEEVDYEKGRL.

The protein belongs to the NusG family.

Participates in transcription elongation, termination and antitermination. This Haemophilus influenzae (strain ATCC 51907 / DSM 11121 / KW20 / Rd) protein is Transcription termination/antitermination protein NusG.